A 316-amino-acid chain; its full sequence is MYTKILGTGSYLPVQVRSNADLEKMVDTSDEWIVTRTGIRERRIAGLDETVATMGFQAAEKALEMAGIDKDDIGLIIVATTSSSHAFPSSACQVQRMLGIKDAASFDLAAACAGFTYALSVADQYVKSGAVKHAIVIGSDVLSRALDPEDRGTIILFGDGAGAVVLGASEQPGIMSTHLHADGRYGELLALPYPDRQQDQPAYVTMAGNEVFKVAVTELAHIVDETLQANNLDRTALDWLVPHQANLRIISATAKKLGMGMDKVVITLDRHGNTSAASVPSAFDEAVRDGRIQRGQLVLLEAFGGGFTWGSALVRF.

Active-site residues include Cys-112 and His-243. The interval 244 to 248 (QANLR) is ACP-binding. Asn-273 is a catalytic residue.

It belongs to the thiolase-like superfamily. FabH family. As to quaternary structure, homodimer.

The protein localises to the cytoplasm. The catalysed reaction is malonyl-[ACP] + acetyl-CoA + H(+) = 3-oxobutanoyl-[ACP] + CO2 + CoA. It participates in lipid metabolism; fatty acid biosynthesis. In terms of biological role, catalyzes the condensation reaction of fatty acid synthesis by the addition to an acyl acceptor of two carbons from malonyl-ACP. Catalyzes the first condensation reaction which initiates fatty acid synthesis and may therefore play a role in governing the total rate of fatty acid production. Possesses both acetoacetyl-ACP synthase and acetyl transacylase activities. Its substrate specificity determines the biosynthesis of branched-chain and/or straight-chain of fatty acids. This chain is Beta-ketoacyl-[acyl-carrier-protein] synthase III, found in Yersinia pseudotuberculosis serotype O:1b (strain IP 31758).